The chain runs to 561 residues: TBC1 domain family member 24 (561 aa).

Positions 36 and 40 each coordinate a 1,2-diacyl-sn-glycero-3-phospho-(1D-myo-inositol). The 192-residue stretch at 45-236 (AQSHTLRGKV…RVFDVFLVEG (192 aa)) folds into the Rab-GAP TBC domain. A 1,2-diacyl-sn-glycero-3-phospho-(1D-myo-inositol)-binding positions include Lys-238, Arg-242, and 293 to 297 (RLFSR). The region spanning 343-556 (EIVSVKEMRD…IAAVEAWGFQ (214 aa)) is the TLDc domain. A phosphoserine mark is found at Ser-475 and Ser-482.

As to quaternary structure, interacts with ARF6. Expressed in brain, particularly at the level of the cortex and the hippocampus. Expressed in the inner ear in spiral ganglion cells, a collection of neurons critical for hearing and balance.

The protein localises to the cell membrane. It is found in the cytoplasm. It localises to the cytoplasmic vesicle membrane. Its subcellular location is the presynapse. In terms of biological role, may act as a GTPase-activating protein for Rab family protein(s). Involved in neuronal projections development, probably through a negative modulation of ARF6 function. Involved in the regulation of synaptic vesicle trafficking. This chain is TBC1 domain family member 24 (Tbc1d24), found in Mus musculus (Mouse).